Reading from the N-terminus, the 391-residue chain is MSETSSNAIPAYLPLRNDLIGEEPYGAPQLDVPVCLNVNENPYAPEPAVVETIAQRVKEIAPTLNRYPDREHIELRKAFSTYLERESGVKLSVDQLWGANGSNEIMLQLFQAFGGPGRIALGCDPTYSMYPEYARDTFTTWKLAHRNADFTLDVDATIKAIEDVKPAMIVLTSPNNPTGTPLKPEDLKRVLEAARTAEVAGAAEGVHPVVVVDEAYIEFRDPGTPTALELIGEYENLAVSRTMSKAFAFAGARVGYLAANKGIIDCVRIVRMPYHLSAVTQAAALAAFEHTDEQLSRVAHLRETRNATSAWLKEQTYKGQPLEVAETQSNFILFGGHFDDRDRIFDELLKRGVLIRVVGPEGWMRVCMGTDEEMARFREALVEVLRIVEQG.

Lys-245 bears the N6-(pyridoxal phosphate)lysine mark.

It belongs to the class-II pyridoxal-phosphate-dependent aminotransferase family. Histidinol-phosphate aminotransferase subfamily. In terms of assembly, homodimer. It depends on pyridoxal 5'-phosphate as a cofactor.

The catalysed reaction is L-histidinol phosphate + 2-oxoglutarate = 3-(imidazol-4-yl)-2-oxopropyl phosphate + L-glutamate. Its pathway is amino-acid biosynthesis; L-histidine biosynthesis; L-histidine from 5-phospho-alpha-D-ribose 1-diphosphate: step 7/9. In Bifidobacterium adolescentis (strain ATCC 15703 / DSM 20083 / NCTC 11814 / E194a), this protein is Histidinol-phosphate aminotransferase.